A 298-amino-acid chain; its full sequence is Movement protein BC1 (298 aa).

The disordered stretch occupies residues Leu-253–Lys-273.

Belongs to the begomovirus movement protein BC1 family. Binds to dimeric supercoiled plasmid DNA. Post-translationally, phosphorylated.

The protein resides in the host cell membrane. The protein localises to the host microsome membrane. It localises to the host endoplasmic reticulum membrane. Functionally, transports viral genome to neighboring plant cells directly through plasmosdesmata, without any budding. The movement protein allows efficient cell to cell propagation, by bypassing the host cell wall barrier. Begomovirus genome is shuttled out of nucleus by Nuclear shuttle protein (NSP) and the movement protein transports the DNA-NSP complex to cell plasmodesmata and facilitates further movement across the cell wall. This chain is Movement protein BC1, found in Hewittia sublobata (Coralbush).